A 344-amino-acid polypeptide reads, in one-letter code: Probable dual-specificity RNA methyltransferase RlmN (344 aa).

Residue Glu-92 is the Proton acceptor of the active site. The Radical SAM core domain occupies 98–325 (DEDRATLCVS…TTIRASRGED (228 aa)). Residues Cys-105 and Cys-330 are joined by a disulfide bond. The [4Fe-4S] cluster site is built by Cys-112, Cys-116, and Cys-119. S-adenosyl-L-methionine-binding positions include 157–158 (GE), Ser-189, 211–213 (SLH), and His-287. Cys-330 (S-methylcysteine intermediate) is an active-site residue.

Belongs to the radical SAM superfamily. RlmN family. It depends on [4Fe-4S] cluster as a cofactor.

It localises to the cytoplasm. It carries out the reaction adenosine(2503) in 23S rRNA + 2 reduced [2Fe-2S]-[ferredoxin] + 2 S-adenosyl-L-methionine = 2-methyladenosine(2503) in 23S rRNA + 5'-deoxyadenosine + L-methionine + 2 oxidized [2Fe-2S]-[ferredoxin] + S-adenosyl-L-homocysteine. It catalyses the reaction adenosine(37) in tRNA + 2 reduced [2Fe-2S]-[ferredoxin] + 2 S-adenosyl-L-methionine = 2-methyladenosine(37) in tRNA + 5'-deoxyadenosine + L-methionine + 2 oxidized [2Fe-2S]-[ferredoxin] + S-adenosyl-L-homocysteine. Its function is as follows. Specifically methylates position 2 of adenine 2503 in 23S rRNA and position 2 of adenine 37 in tRNAs. In Bacteroides fragilis (strain ATCC 25285 / DSM 2151 / CCUG 4856 / JCM 11019 / LMG 10263 / NCTC 9343 / Onslow / VPI 2553 / EN-2), this protein is Probable dual-specificity RNA methyltransferase RlmN.